The sequence spans 196 residues: Putative 3-methyladenine DNA glycosylase (196 aa).

The protein belongs to the DNA glycosylase MPG family.

In Bacillus subtilis (strain 168), this protein is Putative 3-methyladenine DNA glycosylase (yxlJ).